The primary structure comprises 210 residues: Phosphate propanoyltransferase (210 aa).

Residue 26–28 participates in CoA binding; it reads ISN. The Zn(2+) site is built by H30 and H32. CoA contacts are provided by K71 and R78. A phosphate-binding site is contributed by R84. 4 residues coordinate Zn(2+): E90, H138, H140, and H186. N193 serves as a coordination point for CoA.

Belongs to the PduL family. Zn(2+) serves as cofactor.

The protein resides in the bacterial microcompartment. The catalysed reaction is propanoyl-CoA + phosphate = propanoyl phosphate + CoA. It participates in polyol metabolism; 1,2-propanediol degradation. Functionally, involved in 1,2-propanediol (1,2-PD) utilization within the bacterial microcompartment (BMC) dedicated to 1,2-PD degradation by catalyzing the conversion of propanoyl-CoA to propanoyl-phosphate. Required for optimal growth on 1,2-PD. CoA is regenerated within the BMC (for use by PduP) via this enzyme, although there must also be cofactor transport across the BMC. Directly targeted to the BMC. Its function is as follows. Expression of a cosmid containing the full 21-gene pdu operon in E.coli allows E.coli to grow on 1,2-propanediol (1,2-PD) with the appearance of bacterial microcompartments (BMC) in its cytoplasm. The 1,2-PD-specific bacterial microcompartment (BMC) concentrates low levels of 1,2-PD catabolic enzymes, concentrates volatile reaction intermediates thus enhancing pathway flux and keeps the level of toxic, mutagenic propionaldehyde low. In Citrobacter freundii, this protein is Phosphate propanoyltransferase.